Consider the following 421-residue polypeptide: Gamma-glutamyl phosphate reductase (421 aa).

Belongs to the gamma-glutamyl phosphate reductase family.

It is found in the cytoplasm. It carries out the reaction L-glutamate 5-semialdehyde + phosphate + NADP(+) = L-glutamyl 5-phosphate + NADPH + H(+). Its pathway is amino-acid biosynthesis; L-proline biosynthesis; L-glutamate 5-semialdehyde from L-glutamate: step 2/2. Catalyzes the NADPH-dependent reduction of L-glutamate 5-phosphate into L-glutamate 5-semialdehyde and phosphate. The product spontaneously undergoes cyclization to form 1-pyrroline-5-carboxylate. The sequence is that of Gamma-glutamyl phosphate reductase from Leptospira biflexa serovar Patoc (strain Patoc 1 / ATCC 23582 / Paris).